The chain runs to 719 residues: Protein psiJ (719 aa).

Residues 1-21 form the signal peptide; sequence MVSNLLKGLILFSLFISFLNG. The Extracellular portion of the chain corresponds to 22-653; that stretch reads DDKIFPVTIR…RCQSVAVKAG (632 aa). 10 N-linked (GlcNAc...) asparagine glycosylation sites follow: Asn-46, Asn-59, Asn-86, Asn-113, Asn-301, Asn-372, Asn-435, Asn-457, Asn-562, and Asn-628. Positions 112 to 260 constitute a PA14 domain; that stretch reads QNQTDPRVFY…KDYCGVCEGT (149 aa). A helical membrane pass occupies residues 654-674; that stretch reads VIGGAAIAGVVVGGAVALGLA. The Cytoplasmic segment spans residues 675-719; that stretch reads LFGAKAGYNHWMSLKNNQMATSSVNPLYEPSPHQGTNPLWEAPPT.

Belongs to the prespore-cell-inducing factor family.

It is found in the membrane. The chain is Protein psiJ (psiJ) from Dictyostelium discoideum (Social amoeba).